A 148-amino-acid polypeptide reads, in one-letter code: Urease accessory protein UreE (148 aa).

It belongs to the UreE family.

The protein localises to the cytoplasm. Involved in urease metallocenter assembly. Binds nickel. Probably functions as a nickel donor during metallocenter assembly. This Bacillus sp. (strain TB-90) protein is Urease accessory protein UreE.